A 366-amino-acid chain; its full sequence is tRNA N6-adenosine threonylcarbamoyltransferase (366 aa).

Residues His-130, His-134, and Tyr-151 each contribute to the a divalent metal cation site. Residues 151–155 (YVSGG), Asp-183, Gly-198, Glu-202, and Asn-297 contribute to the substrate site. A divalent metal cation is bound at residue Asp-325.

This sequence belongs to the KAE1 / TsaD family. As to quaternary structure, component of the EKC/KEOPS complex composed of at least BUD32, CGI121, GON7, KAE1 and PCC1; the whole complex dimerizes. Requires a divalent metal cation as cofactor.

It is found in the cytoplasm. The protein localises to the nucleus. It catalyses the reaction L-threonylcarbamoyladenylate + adenosine(37) in tRNA = N(6)-L-threonylcarbamoyladenosine(37) in tRNA + AMP + H(+). Functionally, component of the EKC/KEOPS complex that is required for the formation of a threonylcarbamoyl group on adenosine at position 37 (t(6)A37) in tRNAs that read codons beginning with adenine. The complex is probably involved in the transfer of the threonylcarbamoyl moiety of threonylcarbamoyl-AMP (TC-AMP) to the N6 group of A37. KAE1 likely plays a direct catalytic role in this reaction, but requires other protein(s) of the complex to fulfill this activity. The EKC/KEOPS complex also promotes both telomere uncapping and telomere elongation. The complex is required for efficient recruitment of transcriptional coactivators. In Cryptococcus neoformans var. neoformans serotype D (strain JEC21 / ATCC MYA-565) (Filobasidiella neoformans), this protein is tRNA N6-adenosine threonylcarbamoyltransferase.